The chain runs to 24 residues: Ranatuerin-4 (24 aa).

Cys18 and Cys24 are joined by a disulfide.

The protein belongs to the frog skin active peptide (FSAP) family. Ranatuerin subfamily. Expressed by the skin glands.

It is found in the secreted. In terms of biological role, antibacterial activity against Gram-positive bacterium S.aureus (MIC=55 uM). Shows no detectable hemolytic activity towards human erythrocytes. The polypeptide is Ranatuerin-4 (Aquarana catesbeiana (American bullfrog)).